We begin with the raw amino-acid sequence, 187 residues long: Peptide deformylase (187 aa).

The Fe cation site is built by C96 and H138. E139 is an active-site residue. H142 contributes to the Fe cation binding site.

The protein belongs to the polypeptide deformylase family. Fe(2+) is required as a cofactor.

The enzyme catalyses N-terminal N-formyl-L-methionyl-[peptide] + H2O = N-terminal L-methionyl-[peptide] + formate. In terms of biological role, removes the formyl group from the N-terminal Met of newly synthesized proteins. Requires at least a dipeptide for an efficient rate of reaction. N-terminal L-methionine is a prerequisite for activity but the enzyme has broad specificity at other positions. In Brachyspira hyodysenteriae (strain ATCC 49526 / WA1), this protein is Peptide deformylase.